The chain runs to 598 residues: Elongation factor 4 (598 aa).

The tr-type G domain occupies 2 to 184; the sequence is KNIRNFSIIA…EIVAKIPAPE (183 aa). GTP is bound by residues 14–19 and 131–134; these read DHGKST and NKID.

It belongs to the TRAFAC class translation factor GTPase superfamily. Classic translation factor GTPase family. LepA subfamily.

Its subcellular location is the cell inner membrane. It carries out the reaction GTP + H2O = GDP + phosphate + H(+). Its function is as follows. Required for accurate and efficient protein synthesis under certain stress conditions. May act as a fidelity factor of the translation reaction, by catalyzing a one-codon backward translocation of tRNAs on improperly translocated ribosomes. Back-translocation proceeds from a post-translocation (POST) complex to a pre-translocation (PRE) complex, thus giving elongation factor G a second chance to translocate the tRNAs correctly. Binds to ribosomes in a GTP-dependent manner. The chain is Elongation factor 4 from Haemophilus influenzae (strain 86-028NP).